The following is a 425-amino-acid chain: Ribulose bisphosphate carboxylase/oxygenase activase B, chloroplastic (425 aa).

The transit peptide at 1–43 (MASAFSSTVGAPASTPTIFLGKKVKNYYHGGNKMKSRVVRVMA) directs the protein to the chloroplast. Position 153–160 (153–160 (GGKGQGKS)) interacts with ATP.

Belongs to the RuBisCO activase family.

The protein localises to the plastid. Its subcellular location is the chloroplast stroma. In terms of biological role, activation of RuBisCO (ribulose-1,5-bisphosphate carboxylase/oxygenase; EC 4.1.1.39) involves the ATP-dependent carboxylation of the epsilon-amino group of lysine leading to a carbamate structure. This chain is Ribulose bisphosphate carboxylase/oxygenase activase B, chloroplastic (RCAB), found in Hordeum vulgare (Barley).